Reading from the N-terminus, the 51-residue chain is Insulin (51 aa).

Intrachain disulfides connect cysteine 7–cysteine 37, cysteine 19–cysteine 50, and cysteine 36–cysteine 41.

The protein belongs to the insulin family. In terms of assembly, heterodimer of a B chain and an A chain linked by two disulfide bonds.

It is found in the secreted. Its function is as follows. Insulin decreases blood glucose concentration. It increases cell permeability to monosaccharides, amino acids and fatty acids. It accelerates glycolysis, the pentose phosphate cycle, and glycogen synthesis in liver. In Saimiri sciureus (Common squirrel monkey), this protein is Insulin (INS).